The sequence spans 557 residues: Dihydroxy-acid dehydratase (557 aa).

D78 is a Mg(2+) binding site. C119 is a [2Fe-2S] cluster binding site. The Mg(2+) site is built by D120 and K121. K121 carries the post-translational modification N6-carboxylysine. Position 191 (C191) interacts with [2Fe-2S] cluster. E442 contacts Mg(2+). Catalysis depends on S468, which acts as the Proton acceptor.

The protein belongs to the IlvD/Edd family. In terms of assembly, homodimer. The cofactor is [2Fe-2S] cluster. Mg(2+) is required as a cofactor.

It carries out the reaction (2R)-2,3-dihydroxy-3-methylbutanoate = 3-methyl-2-oxobutanoate + H2O. The catalysed reaction is (2R,3R)-2,3-dihydroxy-3-methylpentanoate = (S)-3-methyl-2-oxopentanoate + H2O. The protein operates within amino-acid biosynthesis; L-isoleucine biosynthesis; L-isoleucine from 2-oxobutanoate: step 3/4. It participates in amino-acid biosynthesis; L-valine biosynthesis; L-valine from pyruvate: step 3/4. In terms of biological role, functions in the biosynthesis of branched-chain amino acids. Catalyzes the dehydration of (2R,3R)-2,3-dihydroxy-3-methylpentanoate (2,3-dihydroxy-3-methylvalerate) into 2-oxo-3-methylpentanoate (2-oxo-3-methylvalerate) and of (2R)-2,3-dihydroxy-3-methylbutanoate (2,3-dihydroxyisovalerate) into 2-oxo-3-methylbutanoate (2-oxoisovalerate), the penultimate precursor to L-isoleucine and L-valine, respectively. The protein is Dihydroxy-acid dehydratase of Lachnoclostridium phytofermentans (strain ATCC 700394 / DSM 18823 / ISDg) (Clostridium phytofermentans).